Consider the following 138-residue polypeptide: ATP synthase epsilon chain (138 aa).

Belongs to the ATPase epsilon chain family. F-type ATPases have 2 components, CF(1) - the catalytic core - and CF(0) - the membrane proton channel. CF(1) has five subunits: alpha(3), beta(3), gamma(1), delta(1), epsilon(1). CF(0) has three main subunits: a, b and c.

The protein localises to the cell inner membrane. In terms of biological role, produces ATP from ADP in the presence of a proton gradient across the membrane. The sequence is that of ATP synthase epsilon chain from Citrifermentans bemidjiense (strain ATCC BAA-1014 / DSM 16622 / JCM 12645 / Bem) (Geobacter bemidjiensis).